The chain runs to 141 residues: Large ribosomal subunit protein uL11 (141 aa).

The protein belongs to the universal ribosomal protein uL11 family. Part of the ribosomal stalk of the 50S ribosomal subunit. Interacts with L10 and the large rRNA to form the base of the stalk. L10 forms an elongated spine to which L12 dimers bind in a sequential fashion forming a multimeric L10(L12)X complex. One or more lysine residues are methylated.

In terms of biological role, forms part of the ribosomal stalk which helps the ribosome interact with GTP-bound translation factors. The sequence is that of Large ribosomal subunit protein uL11 from Lactobacillus johnsonii (strain CNCM I-12250 / La1 / NCC 533).